The chain runs to 334 residues: HTH-type transcriptional repressor PurR (334 aa).

An HTH lacI-type domain is found at 2–56 (ATIKDVARLAGVSTTTVSHVINKTRFVAEATQEKVMKAVDELNYAPSAVARSLKC). Positions 4–23 (IKDVARLAGVSTTTVSHVIN) form a DNA-binding region, H-T-H motif. A DNA-binding region spans residues 48 to 56 (SAVARSLKC). F73, K189, F220, and D274 together coordinate hypoxanthine.

In terms of assembly, homodimer.

The protein operates within purine metabolism; purine nucleotide biosynthesis [regulation]. Is the main repressor of the genes involved in the de novo synthesis of purine nucleotides, regulating purB, purC, purEK, purF, purHD, purL, purMN and guaBA expression. PurR is allosterically activated to bind its cognate DNA by binding the purine corepressors, hypoxanthine or guanine, thereby effecting transcription repression. The protein is HTH-type transcriptional repressor PurR of Vibrio vulnificus (strain CMCP6).